The primary structure comprises 331 residues: DSC E3 ubiquitin ligase complex subunit D (331 aa).

Asn-26 is a glycosylation site (N-linked (GlcNAc...) asparagine). Helical transmembrane passes span 63–83 (ILIYCELSALYYMDCSVILFA), 107–127 (PFIGAIFVSNIFCMIFHNFFT), and 159–179 (LFLLDFLVLILDLVMLGLIVE). Residues 197-214 (VQDHDSEERGVHRTRPES) are compositionally biased toward basic and acidic residues. Residues 197-225 (VQDHDSEERGVHRTRPESRSSVVGAELDE) are disordered.

Component of the DSC E3 ubiquitin ligase complex composed of dscA, dscB, dscC and dscD.

It localises to the endoplasmic reticulum membrane. The protein operates within protein modification; protein ubiquitination. Functionally, component of the DSC E3 ubiquitin ligase complex which is required for the srbA transcriptional activator proteolytic cleavage to release the soluble transcription factor from the membrane in low oxygen or sterol conditions. Required for growth during hypoxia and triazole drug susceptibility, as well as for virulence in a murine model of invasive pulmonary aspergillosis (IPA). The chain is DSC E3 ubiquitin ligase complex subunit D from Aspergillus fumigatus (strain CBS 144.89 / FGSC A1163 / CEA10) (Neosartorya fumigata).